Reading from the N-terminus, the 314-residue chain is tRNA pseudouridine synthase B (314 aa).

Residue His-43 participates in substrate binding. The Nucleophile role is filled by Asp-48. 3 residues coordinate substrate: Tyr-76, Tyr-179, and Leu-200.

The protein belongs to the pseudouridine synthase TruB family. Type 1 subfamily.

It carries out the reaction uridine(55) in tRNA = pseudouridine(55) in tRNA. Its function is as follows. Responsible for synthesis of pseudouridine from uracil-55 in the psi GC loop of transfer RNAs. This is tRNA pseudouridine synthase B from Citrobacter koseri (strain ATCC BAA-895 / CDC 4225-83 / SGSC4696).